The following is a 970-amino-acid chain: m7GpppN-mRNA hydrolase (970 aa).

The region spanning 101–228 (KSIPVRGAAI…IKYYLINSMM (128 aa)) is the Nudix hydrolase domain. Ser-116 is modified (phosphoserine). The Nudix box signature appears at 134-155 (GKISKDENDIDCCIREVKEEIG). Positions 149 and 153 each coordinate Mn(2+). Basic and acidic residues predominate over residues 302–314 (QHLKEQSGEHNQQ). 4 disordered regions span residues 302–341 (QHLK…ANNK), 417–465 (AVSQ…PKLK), 501–520 (SSQK…NDSV), and 528–692 (YEDF…LSST). The segment covering 315–334 (KDQQSSFSSQQQPSIFPSLS) has biased composition (low complexity). Ser-439 carries the post-translational modification Phosphoserine. Positions 528 to 539 (YEDFESSSDEEV) are enriched in acidic residues. A compositionally biased stretch (basic and acidic residues) spans 560–576 (SEKDSRRSQKEKPRNDA). The span at 577 to 590 (SKTNLNASAESNSV) shows a compositional bias: polar residues. Residues 596 to 608 (KSSPSTQSKQNSS) show a composition bias toward low complexity. The span at 625–637 (DAYEVFESSSDEE) shows a compositional bias: acidic residues. Thr-677 is subject to Phosphothreonine. Residues 677-691 (TESNKSINETVGLSS) are compositionally biased toward polar residues. Phosphoserine is present on residues Ser-679, Ser-682, Ser-751, Ser-771, Ser-773, and Ser-778. Positions 831–867 (LKKNDSTGYPRTEGGPSSEMSTSMKRNDATNNQELDK) are disordered. Residues 848-863 (SEMSTSMKRNDATNNQ) show a composition bias toward polar residues.

The protein belongs to the Nudix hydrolase family. DCP2 subfamily. As to quaternary structure, component of the decapping complex composed of DCP1 and DCP2. Interacts with mRNA, LSM2, LSM4 and LSM8. Interacts with EDC3. Requires Mn(2+) as cofactor.

It is found in the cytoplasm. The protein localises to the P-body. It carries out the reaction a 5'-end (N(7)-methyl 5'-triphosphoguanosine)-ribonucleoside in mRNA + H2O = N(7)-methyl-GDP + a 5'-end phospho-ribonucleoside in mRNA + 2 H(+). Its function is as follows. Catalytic component of the decapping complex necessary for the degradation of mRNAs, both in normal mRNA turnover and in nonsense-mediated mRNA decay. Removes the 7-methyl guanine cap structure from mRNA molecules, yielding a 5'-phosphorylated mRNA fragment and 7m-GDP. Decapping is the major pathway of mRNA degradation in yeast and occurs through deadenylation, decapping and subsequent 5' to 3' exonucleolytic decay of the transcript body. Blocks autophagy in nutrient-rich conditions by repressing the expression of ATG-related genes through degradation of their transcripts. The polypeptide is m7GpppN-mRNA hydrolase (Saccharomyces cerevisiae (strain ATCC 204508 / S288c) (Baker's yeast)).